The primary structure comprises 249 residues: MHSSLHALPVLQDNVIWIWVRGAEAVVIDPAVAPPVRAWLEKRQLSLAAVLQTHHHADHIGGTPELLQRWPEAEVIASADDRERIPFQTMPVRGGDHVTVLGETVEVMDVAAHTRAHIAFFLPNPKGAEIRPLLFCGDTLFSGGCGRLFEGSAEQMHQALQKLAELPEATQVCCAHEYTEANLQWAVAQQPNNTVLVERYREVRSLRAKGELSLPSSIGLERRTNLFMQASSAAELGFLRSHKDQWRPT.

Zn(2+)-binding residues include H54, H56, D58, H59, H113, D138, and H176.

Belongs to the metallo-beta-lactamase superfamily. Glyoxalase II family. As to quaternary structure, monomer. Zn(2+) is required as a cofactor.

It catalyses the reaction an S-(2-hydroxyacyl)glutathione + H2O = a 2-hydroxy carboxylate + glutathione + H(+). Its pathway is secondary metabolite metabolism; methylglyoxal degradation; (R)-lactate from methylglyoxal: step 2/2. In terms of biological role, thiolesterase that catalyzes the hydrolysis of S-D-lactoyl-glutathione to form glutathione and D-lactic acid. The protein is Hydroxyacylglutathione hydrolase of Synechococcus sp. (strain CC9605).